Reading from the N-terminus, the 245-residue chain is Geranylgeranylglyceryl phosphate synthase (245 aa).

Mg(2+)-binding residues include aspartate 24 and serine 54. Sn-glycerol 1-phosphate contacts are provided by residues 172-178 (YLEAGSG), 203-204 (GG), and 225-226 (GT).

This sequence belongs to the GGGP/HepGP synthase family. Group II subfamily. Mg(2+) serves as cofactor.

Its subcellular location is the cytoplasm. It carries out the reaction sn-glycerol 1-phosphate + (2E,6E,10E)-geranylgeranyl diphosphate = sn-3-O-(geranylgeranyl)glycerol 1-phosphate + diphosphate. Its pathway is membrane lipid metabolism; glycerophospholipid metabolism. Functionally, prenyltransferase that catalyzes the transfer of the geranylgeranyl moiety of geranylgeranyl diphosphate (GGPP) to the C3 hydroxyl of sn-glycerol-1-phosphate (G1P). This reaction is the first ether-bond-formation step in the biosynthesis of archaeal membrane lipids. The polypeptide is Geranylgeranylglyceryl phosphate synthase (Staphylothermus marinus (strain ATCC 43588 / DSM 3639 / JCM 9404 / F1)).